We begin with the raw amino-acid sequence, 752 residues long: Protein WEAK CHLOROPLAST MOVEMENT UNDER BLUE LIGHT-like 2 (752 aa).

At Ser-143 the chain carries Phosphoserine. Coiled coils occupy residues Glu-186–Ser-557 and Glu-596–Met-651. The segment at Lys-476–Cys-495 is disordered. Residues Lys-653–Asn-675 show a composition bias toward basic and acidic residues. A disordered region spans residues Lys-653–Arg-733. Positions Lys-690–Pro-723 are enriched in polar residues.

This sequence belongs to the WEB family.

The polypeptide is Protein WEAK CHLOROPLAST MOVEMENT UNDER BLUE LIGHT-like 2 (WEL2) (Arabidopsis thaliana (Mouse-ear cress)).